Reading from the N-terminus, the 361-residue chain is Cyclin-dependent kinase 10 (361 aa).

Residues 37-321 form the Protein kinase domain; that stretch reads FEKLNRIGEG…AGDCLESSYF (285 aa). Residues 43 to 51 and Lys-66 contribute to the ATP site; that span reads IGEGTYGIV. Asp-161 (proton acceptor) is an active-site residue. Thr-194 carries the post-translational modification Phosphothreonine. The tract at residues 332 to 361 is disordered; that stretch reads LMPTFPHHRNKRATPATSLGTESQSRRGRP.

The protein belongs to the protein kinase superfamily. CMGC Ser/Thr protein kinase family. CDC2/CDKX subfamily. In terms of assembly, heterodimer with CCNQ, the interaction is required for kinase activity. Interacts with ETS2. Interacts with PRK2.

It is found in the cytoplasm. The protein localises to the cytoskeleton. The protein resides in the cilium basal body. The enzyme catalyses L-seryl-[protein] + ATP = O-phospho-L-seryl-[protein] + ADP + H(+). It carries out the reaction L-threonyl-[protein] + ATP = O-phospho-L-threonyl-[protein] + ADP + H(+). Functionally, cyclin-dependent kinase that phosphorylates the transcription factor ETS2 (in vitro) and positively controls its proteasomal degradation (in cells). Involved in the regulation of actin cytoskeleton organization through the phosphorylation of actin dynamics regulators such as PKN2. Is a negative regulator of ciliogenesis through phosphorylation of PKN2 and promotion of RhoA signaling. This is Cyclin-dependent kinase 10 (CDK10) from Bos taurus (Bovine).